A 441-amino-acid chain; its full sequence is Trigger factor (441 aa).

Positions 175–260 (GDKVVIDYNS…LVSIMVPKDV (86 aa)) constitute a PPIase FKBP-type domain.

It belongs to the FKBP-type PPIase family. Tig subfamily.

It localises to the cytoplasm. It carries out the reaction [protein]-peptidylproline (omega=180) = [protein]-peptidylproline (omega=0). Its function is as follows. Involved in protein export. Acts as a chaperone by maintaining the newly synthesized protein in an open conformation. Functions as a peptidyl-prolyl cis-trans isomerase. The sequence is that of Trigger factor from Anaplasma marginale (strain St. Maries).